The primary structure comprises 238 residues: Phosphoribosylaminoimidazole-succinocarboxamide synthase (238 aa).

Belongs to the SAICAR synthetase family.

The enzyme catalyses 5-amino-1-(5-phospho-D-ribosyl)imidazole-4-carboxylate + L-aspartate + ATP = (2S)-2-[5-amino-1-(5-phospho-beta-D-ribosyl)imidazole-4-carboxamido]succinate + ADP + phosphate + 2 H(+). It participates in purine metabolism; IMP biosynthesis via de novo pathway; 5-amino-1-(5-phospho-D-ribosyl)imidazole-4-carboxamide from 5-amino-1-(5-phospho-D-ribosyl)imidazole-4-carboxylate: step 1/2. The chain is Phosphoribosylaminoimidazole-succinocarboxamide synthase from Desulfitobacterium hafniense (strain Y51).